The primary structure comprises 217 residues: Ribosomal RNA small subunit methyltransferase G (217 aa).

S-adenosyl-L-methionine-binding positions include glycine 74, leucine 79, 125-126 (IQ), and arginine 143.

The protein belongs to the methyltransferase superfamily. RNA methyltransferase RsmG family.

The protein resides in the cytoplasm. It catalyses the reaction guanosine(527) in 16S rRNA + S-adenosyl-L-methionine = N(7)-methylguanosine(527) in 16S rRNA + S-adenosyl-L-homocysteine. In terms of biological role, specifically methylates the N7 position of guanine in position 527 of 16S rRNA. This chain is Ribosomal RNA small subunit methyltransferase G, found in Syntrophotalea carbinolica (strain DSM 2380 / NBRC 103641 / GraBd1) (Pelobacter carbinolicus).